A 76-amino-acid chain; its full sequence is Probable 26S proteasome complex subunit dss-1 (76 aa).

2 disordered regions span residues 1–28 (MSST…FEEF) and 52–76 (DDET…HPIA). Basic and acidic residues-rich tracts occupy residues 7-20 (TKKD…KKET) and 57-70 (ESEF…ELRK).

This sequence belongs to the DSS1/SEM1 family. Part of the 26S proteasome.

The protein localises to the nucleus. Its subcellular location is the cytoplasm. Functionally, subunit of the 26S proteasome which plays a role in ubiquitin-dependent proteolysis. Has an essential role in oogenesis and larval growth. Required for intestinal function and default lifespan. The sequence is that of Probable 26S proteasome complex subunit dss-1 from Caenorhabditis briggsae.